The primary structure comprises 278 residues: NADPH-dependent 7-cyano-7-deazaguanine reductase (278 aa).

Position 87-89 (87-89 (IES)) interacts with substrate. 89 to 90 (SK) lines the NADPH pocket. C185 acts as the Thioimide intermediate in catalysis. The Proton donor role is filled by D192. Residue 224–225 (HE) participates in substrate binding. NADPH is bound at residue 253-254 (RG). The tract at residues 255-278 (GLDINPYRSTNPTFSVQNHRSFRQ) is disordered. The span at 261-278 (YRSTNPTFSVQNHRSFRQ) shows a compositional bias: polar residues.

This sequence belongs to the GTP cyclohydrolase I family. QueF type 2 subfamily. Homodimer.

It localises to the cytoplasm. The enzyme catalyses 7-aminomethyl-7-carbaguanine + 2 NADP(+) = 7-cyano-7-deazaguanine + 2 NADPH + 3 H(+). Its pathway is tRNA modification; tRNA-queuosine biosynthesis. Catalyzes the NADPH-dependent reduction of 7-cyano-7-deazaguanine (preQ0) to 7-aminomethyl-7-deazaguanine (preQ1). The polypeptide is NADPH-dependent 7-cyano-7-deazaguanine reductase (Coxiella burnetii (strain CbuG_Q212) (Coxiella burnetii (strain Q212))).